Here is a 291-residue protein sequence, read N- to C-terminus: Farnesyl diphosphate synthase (291 aa).

Residues K44, R47, and H76 each contribute to the isopentenyl diphosphate site. Residues D83 and D89 each contribute to the Mg(2+) site. R94 is a binding site for (2E)-geranyl diphosphate. R95 serves as a coordination point for isopentenyl diphosphate. The (2E)-geranyl diphosphate site is built by K177, T178, Q215, and K232.

It belongs to the FPP/GGPP synthase family. Requires Mg(2+) as cofactor.

It is found in the cytoplasm. It catalyses the reaction isopentenyl diphosphate + (2E)-geranyl diphosphate = (2E,6E)-farnesyl diphosphate + diphosphate. The sequence is that of Farnesyl diphosphate synthase (fps) from Micrococcus luteus (Micrococcus lysodeikticus).